The following is a 92-amino-acid chain: Small ribosomal subunit protein uS17 (92 aa).

The protein belongs to the universal ribosomal protein uS17 family. In terms of assembly, part of the 30S ribosomal subunit.

In terms of biological role, one of the primary rRNA binding proteins, it binds specifically to the 5'-end of 16S ribosomal RNA. The sequence is that of Small ribosomal subunit protein uS17 from Cupriavidus metallidurans (strain ATCC 43123 / DSM 2839 / NBRC 102507 / CH34) (Ralstonia metallidurans).